A 217-amino-acid polypeptide reads, in one-letter code: Grancalcin (217 aa).

4 EF-hand domains span residues Ser48–Asn83, Phe89–Asn122, Ala119–Arg154, and Leu155–Ala180. Residues Asp65, Asp69, and Glu71 each coordinate Ca(2+). Asp132, Asp134, Ser136, Thr138, and Glu143 together coordinate Ca(2+).

In terms of assembly, homodimer. Interacts with SRI and LCP1. Detected in neutrophils and macrophages (at protein level). Highly expressed in bone marrow.

The protein resides in the cytoplasm. It localises to the cytoplasmic granule membrane. Its function is as follows. Calcium-binding protein that may play a role in the adhesion of neutrophils to fibronectin. May play a role in the formation of focal adhesions. The chain is Grancalcin (GCA) from Homo sapiens (Human).